A 407-amino-acid polypeptide reads, in one-letter code: 1-deoxy-D-xylulose 5-phosphate reductoisomerase (407 aa).

Thr25, Gly26, Ser27, Ile28, Asn53, and Asn136 together coordinate NADPH. Lys137 is a 1-deoxy-D-xylulose 5-phosphate binding site. Position 138 (Glu138) interacts with NADPH. Asp162 provides a ligand contact to Mn(2+). Ser163, Glu164, Ser188, and His211 together coordinate 1-deoxy-D-xylulose 5-phosphate. A Mn(2+)-binding site is contributed by Glu164. An NADPH-binding site is contributed by Gly217. Ser224, Asn229, Lys230, and Glu233 together coordinate 1-deoxy-D-xylulose 5-phosphate. Residue Glu233 participates in Mn(2+) binding.

It belongs to the DXR family. Requires Mg(2+) as cofactor. It depends on Mn(2+) as a cofactor.

The enzyme catalyses 2-C-methyl-D-erythritol 4-phosphate + NADP(+) = 1-deoxy-D-xylulose 5-phosphate + NADPH + H(+). Its pathway is isoprenoid biosynthesis; isopentenyl diphosphate biosynthesis via DXP pathway; isopentenyl diphosphate from 1-deoxy-D-xylulose 5-phosphate: step 1/6. In terms of biological role, catalyzes the NADPH-dependent rearrangement and reduction of 1-deoxy-D-xylulose-5-phosphate (DXP) to 2-C-methyl-D-erythritol 4-phosphate (MEP). The sequence is that of 1-deoxy-D-xylulose 5-phosphate reductoisomerase from Bradyrhizobium diazoefficiens (strain JCM 10833 / BCRC 13528 / IAM 13628 / NBRC 14792 / USDA 110).